The sequence spans 217 residues: Large ribosomal subunit protein uL1 (217 aa).

This sequence belongs to the universal ribosomal protein uL1 family. In terms of assembly, part of the 50S ribosomal subunit.

Its function is as follows. Binds directly to 23S rRNA. The L1 stalk is quite mobile in the ribosome, and is involved in E site tRNA release. Functionally, protein L1 is also a translational repressor protein, it controls the translation of the L11 operon by binding to its mRNA. The sequence is that of Large ribosomal subunit protein uL1 from Anaplasma marginale (strain St. Maries).